We begin with the raw amino-acid sequence, 224 residues long: Putative carbamate hydrolase RutD (224 aa).

An AB hydrolase-1 domain is found at 14–115 (PVVVLISGLG…TVLVSVNGWL (102 aa)).

The protein belongs to the AB hydrolase superfamily. Hydrolase RutD family.

The catalysed reaction is carbamate + 2 H(+) = NH4(+) + CO2. Functionally, involved in pyrimidine catabolism. May facilitate the hydrolysis of carbamate, a reaction that can also occur spontaneously. This is Putative carbamate hydrolase RutD from Shigella dysenteriae serotype 1 (strain Sd197).